The chain runs to 170 residues: M-agglutinin (170 aa).

An N-terminal signal peptide occupies residues 1–24; sequence MNLKKIAIASSVFAGITMALTCHA.

In terms of biological role, this protein is a non-fimbrial hemagglutinin that is specific for blood group M. The chain is M-agglutinin (bmaE) from Escherichia coli.